The chain runs to 622 residues: Prothrombin (622 aa).

Residues 1–24 (MAHVRGLQLPGCLALAALCSLVHS) form the signal peptide. The propeptide occupies 25–43 (QHVFLAPQQARSLLQRVRR). Positions 44 to 89 (ANTFLEEVRKGNLERECVEETCSYEEAFEALESSTATDVFWAKYTA) constitute a Gla domain. Residues glutamate 49, glutamate 50, glutamate 57, glutamate 59, glutamate 62, glutamate 63, glutamate 68, glutamate 69, glutamate 72, and glutamate 75 each carry the 4-carboxyglutamate modification. Residues cysteine 60 and cysteine 65 are joined by a disulfide bond. 11 disulfide bridges follow: cysteine 90-cysteine 103, cysteine 108-cysteine 186, cysteine 129-cysteine 169, cysteine 157-cysteine 181, cysteine 213-cysteine 291, cysteine 234-cysteine 274, cysteine 262-cysteine 286, cysteine 336-cysteine 482, cysteine 391-cysteine 407, cysteine 536-cysteine 550, and cysteine 564-cysteine 594. Kringle domains follow at residues 108 to 186 (CAEG…IPVC) and 213 to 291 (CVPD…LNYC). Residues asparagine 121 and asparagine 143 are each glycosylated (N-linked (GlcNAc...) (complex) asparagine). Residues 364-618 (IVEGSDAEIG…LKKWIQKVID (255 aa)) form the Peptidase S1 domain. The active-site Charge relay system is histidine 406. A glycan (N-linked (GlcNAc...) (complex) asparagine) is linked at asparagine 416. The Charge relay system role is filled by aspartate 462. The segment at 551 to 573 (AGYKPDEGKRGDACEGDSGGPFV) is high affinity receptor-binding region which is also known as the TP508 peptide. The active-site Charge relay system is serine 568.

The protein belongs to the peptidase S1 family. As to quaternary structure, heterodimer (named alpha-thrombin) of a light and a heavy chain; disulfide-linked. Forms a heterodimer with SERPINA5. In plasma, interacts (via N-terminus) with alpha-1-microglobulin with molar ratio 1:2 and 1:1; this interaction does not prevent the activation of prothrombin to thrombin. Interacts (thrombin) with iripin-8, a serine protease inhibitor from Ixodes ricinus saliva. Interacts (thrombin) with iripin-3, a serine protease inhibitor from Ixodes ricinus saliva. Interacts (thrombin) with Anopheles albimanus salivary thrombin inhibitor anophelin; the interaction results in thrombin inhibition. Interacts (thrombin) with Anopheles gambiae salivary thrombin inhibitor anophelin; the interaction results in thrombin inhibition. Interacts (thrombin) with Amblyomma variegatum variegin; the interaction results in thrombin inhibition. Interacts (thrombin) with Xenopsylla cheopis salivary thrombin inhibitor XC-42. Interacts (thrombin) with Xenopsylla cheopis salivary thrombin inhibitor XC-43. The gamma-carboxyglutamyl residues, which bind calcium ions, result from the carboxylation of glutamyl residues by a microsomal enzyme, the vitamin K-dependent carboxylase. The modified residues are necessary for the calcium-dependent interaction with a negatively charged phospholipid surface, which is essential for the conversion of prothrombin to thrombin. In terms of processing, N-glycosylated. N-glycan heterogeneity at Asn-121: Hex3HexNAc3 (minor), Hex4HexNAc3 (minor) and Hex5HexNAc4 (major). At Asn-143: Hex4HexNAc3 (minor) and Hex5HexNAc4 (major). Post-translationally, in the penultimate step of the coagulation cascade, prothrombin is converted to thrombin by the prothrombinase complex composed of factor Xa (F10), cofactor Va (F5), and phospholipids. This activation requires factor Xa-catalyzed sequential cleavage at 2 sites, Arg-314 and Arg-363, along 2 possible pathways. In the first pathway, the first cleavage occurs at Arg-314, leading to the formation of the inactive intermediate prethrombin-2. This pathway preferentially occurs on platelets and in the absence of cofactor Va. In the second pathway, the first cleavage occurs at Arg-363, which separates protease domain into 2 chains that remain connected through a disulfide bond and generates the active intermediate meizothrombin. The presence of cofactor Va directs activation along the meizothrombin pathway and greatly accelerates the rate of cleavage at Arg-363, but has a smaller effect on the cleavage of meizothrombin at Arg-314. Meizothrombin accumulates as an intermediate when prothrombinase is assembled on the membrane of red blood cells. As to expression, expressed by the liver and secreted in plasma.

It is found in the secreted. The protein localises to the extracellular space. The catalysed reaction is Selective cleavage of Arg-|-Gly bonds in fibrinogen to form fibrin and release fibrinopeptides A and B.. With respect to regulation, activity is promoted in the presence of negatively charged surfaces, such as polyphosphate and dextran sulfate. Inhibited by SERPINA5. Its function is as follows. Thrombin, which cleaves bonds after Arg and Lys, converts fibrinogen to fibrin and activates factors V, VII, VIII, XIII, and, in complex with thrombomodulin, protein C. Functions in blood homeostasis, inflammation and wound healing. Activates coagulation factor XI (F11); activation is promoted by the contact with negatively charged surfaces. Triggers the production of pro-inflammatory cytokines, such as MCP-1/CCL2 and IL8/CXCL8, in endothelial cells. The protein is Prothrombin (F2) of Homo sapiens (Human).